Consider the following 232-residue polypeptide: Zinc finger protein RTS2 (232 aa).

Residues 24–48 form a C2H2-type zinc finger; that stretch reads YYCQICQRQCKDANGFQSHNKSPSH. 2 disordered regions span residues 180 to 199 and 211 to 232; these read AKRQTEKVYQPEMKSEISGD and GNGRVNKKKKKVPPRKDGIKFR.

The protein resides in the nucleus. The chain is Zinc finger protein RTS2 (RTS2) from Saccharomyces cerevisiae (strain ATCC 204508 / S288c) (Baker's yeast).